Here is a 372-residue protein sequence, read N- to C-terminus: UDP-N-acetylglucosamine--N-acetylmuramyl-(pentapeptide) pyrophosphoryl-undecaprenol N-acetylglucosamine transferase (372 aa).

UDP-N-acetyl-alpha-D-glucosamine contacts are provided by residues 11–13, asparagine 123, arginine 160, serine 200, and glutamine 298; that span reads TAG.

It belongs to the glycosyltransferase 28 family. MurG subfamily.

The protein localises to the cell membrane. The catalysed reaction is di-trans,octa-cis-undecaprenyl diphospho-N-acetyl-alpha-D-muramoyl-L-alanyl-D-glutamyl-meso-2,6-diaminopimeloyl-D-alanyl-D-alanine + UDP-N-acetyl-alpha-D-glucosamine = di-trans,octa-cis-undecaprenyl diphospho-[N-acetyl-alpha-D-glucosaminyl-(1-&gt;4)]-N-acetyl-alpha-D-muramoyl-L-alanyl-D-glutamyl-meso-2,6-diaminopimeloyl-D-alanyl-D-alanine + UDP + H(+). It functions in the pathway cell wall biogenesis; peptidoglycan biosynthesis. In terms of biological role, cell wall formation. Catalyzes the transfer of a GlcNAc subunit on undecaprenyl-pyrophosphoryl-MurNAc-pentapeptide (lipid intermediate I) to form undecaprenyl-pyrophosphoryl-MurNAc-(pentapeptide)GlcNAc (lipid intermediate II). In Cutibacterium acnes (strain DSM 16379 / KPA171202) (Propionibacterium acnes), this protein is UDP-N-acetylglucosamine--N-acetylmuramyl-(pentapeptide) pyrophosphoryl-undecaprenol N-acetylglucosamine transferase.